A 944-amino-acid polypeptide reads, in one-letter code: Translation factor GUF1 homolog, mitochondrial (944 aa).

The tr-type G domain occupies 201 to 379 (KNVRNFCILA…IITDIPYPPI (179 aa)). Residues 210 to 217 (AHIDSGKS), 271 to 275 (DTPGH), and 325 to 328 (NKID) each bind GTP.

Belongs to the TRAFAC class translation factor GTPase superfamily. Classic translation factor GTPase family. LepA subfamily.

Its subcellular location is the mitochondrion inner membrane. It carries out the reaction GTP + H2O = GDP + phosphate + H(+). Its function is as follows. Promotes mitochondrial protein synthesis. May act as a fidelity factor of the translation reaction, by catalyzing a one-codon backward translocation of tRNAs on improperly translocated ribosomes. Binds to mitochondrial ribosomes in a GTP-dependent manner. The protein is Translation factor GUF1 homolog, mitochondrial of Plasmodium yoelii yoelii.